Consider the following 257-residue polypeptide: Major prion protein (257 aa).

The signal sequence occupies residues Met-1–Cys-24. The interval Lys-25 to Ala-234 is interaction with GRB2, ERI3 and SYN1. The tract at residues Arg-27–Lys-114 is disordered. Repeat copies occupy residues Pro-54–Gln-62, Pro-63–Gln-70, Pro-71–Gln-78, Pro-79–Gln-86, and Pro-87–Gln-95. Positions Pro-54 to Gln-95 are 5 X 8 AA tandem repeats of P-H-G-G-G-W-G-Q. Positions Gln-55–Gly-101 are enriched in gly residues. Cu(2+) is bound by residues His-64, Gly-65, Gly-66, His-72, Gly-73, Gly-74, His-80, Gly-81, Gly-82, His-88, Gly-90, and Gly-91. The cysteines at positions 183 and 218 are disulfide-linked. Asn-185 and Asn-201 each carry an N-linked (GlcNAc...) asparagine glycan. Residue Ala-234 is the site of GPI-anchor amidated alanine attachment. The propeptide at Ser-235–Gly-257 is removed in mature form.

This sequence belongs to the prion family. In terms of assembly, monomer and homodimer. Has a tendency to aggregate into amyloid fibrils containing a cross-beta spine, formed by a steric zipper of superposed beta-strands. Soluble oligomers may represent an intermediate stage on the path to fibril formation. Copper binding may promote oligomerization. Interacts with GRB2, APP, ERI3/PRNPIP and SYN1. Mislocalized cytosolically exposed PrP interacts with MGRN1; this interaction alters MGRN1 subcellular location and causes lysosomal enlargement. Interacts with KIAA1191.

The protein resides in the cell membrane. The protein localises to the golgi apparatus. In terms of biological role, its primary physiological function is unclear. Has cytoprotective activity against internal or environmental stresses. May play a role in neuronal development and synaptic plasticity. May be required for neuronal myelin sheath maintenance. May play a role in iron uptake and iron homeostasis. Soluble oligomers are toxic to cultured neuroblastoma cells and induce apoptosis (in vitro). Association with GPC1 (via its heparan sulfate chains) targets PRNP to lipid rafts. Also provides Cu(2+) or Zn(2+) for the ascorbate-mediated GPC1 deaminase degradation of its heparan sulfate side chains. In Mustela putorius furo (European domestic ferret), this protein is Major prion protein (PRNP).